A 329-amino-acid polypeptide reads, in one-letter code: 4-hydroxythreonine-4-phosphate dehydrogenase (329 aa).

Residues H136 and T137 each coordinate substrate. 3 residues coordinate a divalent metal cation: H166, H211, and H266. The substrate site is built by K274, N283, and R292.

This sequence belongs to the PdxA family. In terms of assembly, homodimer. Zn(2+) is required as a cofactor. The cofactor is Mg(2+). Co(2+) serves as cofactor.

Its subcellular location is the cytoplasm. It catalyses the reaction 4-(phosphooxy)-L-threonine + NAD(+) = 3-amino-2-oxopropyl phosphate + CO2 + NADH. The protein operates within cofactor biosynthesis; pyridoxine 5'-phosphate biosynthesis; pyridoxine 5'-phosphate from D-erythrose 4-phosphate: step 4/5. Catalyzes the NAD(P)-dependent oxidation of 4-(phosphooxy)-L-threonine (HTP) into 2-amino-3-oxo-4-(phosphooxy)butyric acid which spontaneously decarboxylates to form 3-amino-2-oxopropyl phosphate (AHAP). The chain is 4-hydroxythreonine-4-phosphate dehydrogenase from Escherichia coli O7:K1 (strain IAI39 / ExPEC).